A 612-amino-acid polypeptide reads, in one-letter code: UvrABC system protein C (612 aa).

The region spanning 20 to 98 (THSGVYRMLD…IKQHRPKYNI (79 aa)) is the GIY-YIG domain. Residues 208–243 (SSVLEEISAKMYQASEDMEYEKAQVYRDQLVVLRKL) enclose the UVR domain.

This sequence belongs to the UvrC family. In terms of assembly, interacts with UvrB in an incision complex.

The protein resides in the cytoplasm. The UvrABC repair system catalyzes the recognition and processing of DNA lesions. UvrC both incises the 5' and 3' sides of the lesion. The N-terminal half is responsible for the 3' incision and the C-terminal half is responsible for the 5' incision. This is UvrABC system protein C from Francisella tularensis subsp. tularensis (strain FSC 198).